We begin with the raw amino-acid sequence, 414 residues long: Ribulose bisphosphate carboxylase large chain (414 aa).

Substrate is bound by residues asparagine 102 and threonine 152. The active-site Proton acceptor is the lysine 154. Lysine 156 is a substrate binding site. Positions 180, 182, and 183 each coordinate Mg(2+). Lysine 180 is modified (N6-carboxylysine). Histidine 273 (proton acceptor) is an active-site residue. Positions 274, 306, and 358 each coordinate substrate.

It belongs to the RuBisCO large chain family. Type I subfamily. As to quaternary structure, heterohexadecamer of 8 large chains and 8 small chains; disulfide-linked. The disulfide link is formed within the large subunit homodimers. It depends on Mg(2+) as a cofactor. In terms of processing, the disulfide bond which can form in the large chain dimeric partners within the hexadecamer appears to be associated with oxidative stress and protein turnover.

It localises to the plastid. Its subcellular location is the chloroplast. It catalyses the reaction 2 (2R)-3-phosphoglycerate + 2 H(+) = D-ribulose 1,5-bisphosphate + CO2 + H2O. The enzyme catalyses D-ribulose 1,5-bisphosphate + O2 = 2-phosphoglycolate + (2R)-3-phosphoglycerate + 2 H(+). RuBisCO catalyzes two reactions: the carboxylation of D-ribulose 1,5-bisphosphate, the primary event in carbon dioxide fixation, as well as the oxidative fragmentation of the pentose substrate in the photorespiration process. Both reactions occur simultaneously and in competition at the same active site. This Antrophyum reticulatum (Ox-tongue fern) protein is Ribulose bisphosphate carboxylase large chain (rbcL).